We begin with the raw amino-acid sequence, 557 residues long: Eudesmanediol synthase (557 aa).

2 residues coordinate Mg(2+): aspartate 310 and aspartate 314. The substrate site is built by aspartate 310, aspartate 314, arginine 450, and asparagine 453. A DDXXD motif motif is present at residues 310–314 (DDTFD). Residues asparagine 453 and serine 457 each coordinate Mg(2+).

It belongs to the terpene synthase family. Monomer. Mg(2+) serves as cofactor. Mn(2+) is required as a cofactor. In terms of tissue distribution, specifically expressed in roots.

It is found in the cytoplasm. The catalysed reaction is (2E,6E)-farnesyl diphosphate + 2 H2O = 7-epi-ent-eudesmane-5,11-diol + diphosphate. It participates in secondary metabolite biosynthesis; terpenoid biosynthesis. Functionally, component of the volatile terpenes biosynthesis pathways. Dihydroxylated sesquiterpenoid synthase that generates dually hydroxylated products directly from (E,E)-farnesyl diphosphate, primarily eudesmane-2,11-diol, along with two closely related structural isomers. The chain is Eudesmanediol synthase from Zea mays (Maize).